Here is a 143-residue protein sequence, read N- to C-terminus: Nuclear transcription factor Y subunit B-4 (143 aa).

The tract at residues 1–23 (MSEGFDGTENGGGGGGGGVGKEQ) is disordered. A compositionally biased stretch (gly residues) spans 9 to 20 (ENGGGGGGGGVG). Residues 27–33 (LPIANIG) mediate DNA binding. The tract at residues 54-65 (VQECVSEFISFI) is subunit association domain (SAD). Basic and acidic residues predominate over residues 117-130 (KGSRASELPVKKDV). The interval 117–143 (KGSRASELPVKKDVVLNGDPGSSFEGM) is disordered.

It belongs to the NFYB/HAP3 subunit family. In terms of assembly, heterotrimeric transcription factor composed of three components, NF-YA, NF-YB and NF-YC. NF-YB and NF-YC must interact and dimerize for NF-YA association and DNA binding. As to expression, ubiquitous.

It is found in the nucleus. Component of the NF-Y/HAP transcription factor complex. The NF-Y complex stimulates the transcription of various genes by recognizing and binding to a CCAAT motif in promoters. May regulate the expression of photosynthetic genes, and may be involved in chloroplast and amyloplast development. In Oryza sativa subsp. japonica (Rice), this protein is Nuclear transcription factor Y subunit B-4 (NFYB4).